Here is a 423-residue protein sequence, read N- to C-terminus: FAD-dependent monooxygenase asL6 (423 aa).

FAD-binding positions include 10–13 (AGVA), 34–35 (ER), arginine 108, tyrosine 290, and aspartate 312. Residues 371 to 391 (GMGMFQSKFGVGVFYVLLAII) form a helical membrane-spanning segment.

Belongs to the aromatic-ring hydroxylase family. FAD serves as cofactor.

It is found in the membrane. It functions in the pathway secondary metabolite biosynthesis; terpenoid biosynthesis. In terms of biological role, FAD-dependent monooxygenase; part of the gene cluster that mediates the biosynthesis of xenovulene A, an unusual meroterpenoid that has potent inhibitory effects on the human gamma-aminobutyrate A (GABAA) benzodiazepine receptor. The first step of xenovulene A biosynthesis is the biosynthesis of 3-methylorcinaldehyde performed by the non-reducing polyketide synthase aspks1. The salicylate hydroxylase asL1 then catalyzes the oxidative dearomatization of 3-methylorcinaldehyde to yield a dearomatized hydroxycyclohexadione. The 2-oxoglutarate-dependent dioxygenase asL3 further catalyzes the oxidative ring expansion to provide the first tropolone metabolite. The cytochrome P450 monooxygenase asR2 allows the synthesis of tropolone hemiacetal. In parallel, a previously unrecognised class of terpene cyclase, asR6, produces alpha-humulene from farnesylpyrophosphate (FPP). The putative Diels-Alderase asR5 probably catalyzes the formation of the tropolone-humulene skeleton by linking humulene and the polyketide moiety. Oxidative-ring contractions catalyzed by asL4 and asL6 then processively remove carbon atoms from the polyketide to yield xenovulene A. This is FAD-dependent monooxygenase asL6 from Sarocladium schorii (Acremonium strictum (strain IMI 501407)).